The sequence spans 359 residues: Peptide chain release factor 1 (359 aa).

Gln-235 carries the post-translational modification N5-methylglutamine.

It belongs to the prokaryotic/mitochondrial release factor family. In terms of processing, methylated by PrmC. Methylation increases the termination efficiency of RF1.

The protein localises to the cytoplasm. Peptide chain release factor 1 directs the termination of translation in response to the peptide chain termination codons UAG and UAA. The sequence is that of Peptide chain release factor 1 from Nitrosomonas eutropha (strain DSM 101675 / C91 / Nm57).